The primary structure comprises 202 residues: Tetranectin (202 aa).

Positions 1–21 (MGFWGTYLLFCLFSFLSQLTA) are cleaved as a signal peptide. Disulfide bonds link cysteine 71–cysteine 81, cysteine 98–cysteine 197, and cysteine 173–cysteine 189. One can recognise a C-type lectin domain in the interval 77–198 (VNLKCLLAFT…CRDQLPYICQ (122 aa)).

Homotrimer. In terms of tissue distribution, highest expression in lung, skeletal muscle and heart. Expressed in retina.

It is found in the secreted. In terms of biological role, tetranectin binds to plasminogen and to isolated kringle 4. May be involved in the packaging of molecules destined for exocytosis. Plays a role in retinal function. The polypeptide is Tetranectin (Clec3b) (Mus musculus (Mouse)).